We begin with the raw amino-acid sequence, 245 residues long: Uridylate kinase (245 aa).

Residue 12-15 (KLSG) coordinates ATP. Positions 20-25 (GERGVG) are involved in allosteric activation by GTP. Glycine 54 is a UMP binding site. ATP-binding residues include glycine 55 and arginine 59. Residues aspartate 74 and 135-142 (IGSPYFST) each bind UMP. ATP-binding residues include asparagine 163, tyrosine 169, and aspartate 172.

This sequence belongs to the UMP kinase family. In terms of assembly, homohexamer.

The protein resides in the cytoplasm. It catalyses the reaction UMP + ATP = UDP + ADP. Its pathway is pyrimidine metabolism; CTP biosynthesis via de novo pathway; UDP from UMP (UMPK route): step 1/1. With respect to regulation, allosterically activated by GTP. Inhibited by UTP. Functionally, catalyzes the reversible phosphorylation of UMP to UDP. The protein is Uridylate kinase of Streptococcus pneumoniae serotype 2 (strain D39 / NCTC 7466).